Here is a 931-residue protein sequence, read N- to C-terminus: Protein phosphatase 1 regulatory subunit 37 homolog (931 aa).

The interval 20-71 is disordered; it reads TAASSPASPIPPTSPSMFATPPHQQSHSSATSVRKKVCQEANSSADDPDSDA. The span at 41–51 shows a compositional bias: polar residues; that stretch reads PHQQSHSSATS. LRR repeat units lie at residues 232–259, 262–285, 290–314, 323–346, 351–374, 379–407, 409–430, and 435–458; these read AISLQMLNLRYTNLNDRSIPSLCKLARA, SASLTCIHLENTQMSGKNLLVLIC, NTGIRELYLGDNGLQPTDGSHIYQL, LLDLRNNNIGDSGVRHICEGLRNR, KSALSAMVLWNNNVTGASMDSLAE, NTKIETLNIGSNNLGVEGVARLKPALVSN, HLHRLGLQNTGINCEGAIILAE, and NTALLRVDIRDNPIALAGLLALHS. The segment covering 519–533 has biased composition (basic and acidic residues); sequence QDHVSEDTEKENKDA. 2 disordered regions span residues 519–602 and 780–807; these read QDHV…RHQR and PDCTNTCEEPTTSREAERKRAEETIRQR. Acidic residues predominate over residues 534–547; the sequence is DNDDKEPENEDGDT. Residues 554-563 are compositionally biased toward low complexity; that stretch reads SDASADQSDS. 2 stretches are compositionally biased toward basic and acidic residues: residues 564-584 and 790-807; these read PADKEKSEKSKKENNNNEKRP and TTSREAERKRAEETIRQR.

This sequence belongs to the PPP1R37 family.

The chain is Protein phosphatase 1 regulatory subunit 37 homolog from Caenorhabditis briggsae.